We begin with the raw amino-acid sequence, 288 residues long: ATP phosphoribosyltransferase (288 aa).

The protein belongs to the ATP phosphoribosyltransferase family. Long subfamily. Requires Mg(2+) as cofactor.

The protein localises to the cytoplasm. The enzyme catalyses 1-(5-phospho-beta-D-ribosyl)-ATP + diphosphate = 5-phospho-alpha-D-ribose 1-diphosphate + ATP. The protein operates within amino-acid biosynthesis; L-histidine biosynthesis; L-histidine from 5-phospho-alpha-D-ribose 1-diphosphate: step 1/9. Its activity is regulated as follows. Feedback inhibited by histidine. In terms of biological role, catalyzes the condensation of ATP and 5-phosphoribose 1-diphosphate to form N'-(5'-phosphoribosyl)-ATP (PR-ATP). Has a crucial role in the pathway because the rate of histidine biosynthesis seems to be controlled primarily by regulation of HisG enzymatic activity. The chain is ATP phosphoribosyltransferase from Methanococcus maripaludis (strain DSM 14266 / JCM 13030 / NBRC 101832 / S2 / LL).